The primary structure comprises 185 residues: ATP synthase subunit b, chloroplastic (185 aa).

The helical transmembrane segment at 7–29 (SFVYLVGHCPFAGSFAFNTDILA) threads the bilayer.

The protein belongs to the ATPase B chain family. As to quaternary structure, F-type ATPases have 2 components, F(1) - the catalytic core - and F(0) - the membrane proton channel. F(1) has five subunits: alpha(3), beta(3), gamma(1), delta(1), epsilon(1). F(0) has four main subunits: a(1), b(1), b'(1) and c(10-14). The alpha and beta chains form an alternating ring which encloses part of the gamma chain. F(1) is attached to F(0) by a central stalk formed by the gamma and epsilon chains, while a peripheral stalk is formed by the delta, b and b' chains.

It localises to the plastid. It is found in the chloroplast thylakoid membrane. In terms of biological role, f(1)F(0) ATP synthase produces ATP from ADP in the presence of a proton or sodium gradient. F-type ATPases consist of two structural domains, F(1) containing the extramembraneous catalytic core and F(0) containing the membrane proton channel, linked together by a central stalk and a peripheral stalk. During catalysis, ATP synthesis in the catalytic domain of F(1) is coupled via a rotary mechanism of the central stalk subunits to proton translocation. Functionally, component of the F(0) channel, it forms part of the peripheral stalk, linking F(1) to F(0). The sequence is that of ATP synthase subunit b, chloroplastic from Dioscorea elephantipes (Elephant's foot yam).